A 418-amino-acid chain; its full sequence is DnaJ protein homolog 2 (418 aa).

The J domain maps to 11-76 (NTKYYEVLGV…REIYDQYGEE (66 aa)). The segment at 135–219 (GTSKKLSLSR…CKGEKVVQQK (85 aa)) adopts a CR-type zinc-finger fold. 4 CXXCXGXG motif repeats span residues 148–155 (CTKCKGKG), 164–171 (CASCQGSG), 191–198 (CNECKGTG), and 207–214 (CPQCKGEK). Residues 382–418 (VNIEEEMRRKQHQQAQEAYDEDDEGHGGAQRVQCAQQ) form a disordered region. The residue at position 415 (Cys415) is a Cysteine methyl ester. Cys415 carries S-farnesyl cysteine lipidation. Residues 416-418 (AQQ) constitute a propeptide, removed in mature form.

The protein resides in the membrane. Functionally, plays a continuous role in plant development probably in the structural organization of compartments. The polypeptide is DnaJ protein homolog 2 (LDJ2) (Allium porrum (Leek)).